A 199-amino-acid chain; its full sequence is MLKILVIDRCHFTRTGIEALLNHSGRFSSSFLVSGINNLLLAKEHILQWKPHLVIADLNSFISETHSSPPINPFFMSCGVIPLILLQSADRQHAPIAPSQSVAHSVLTKHTTLNTLSHTIQEALQVRPALEIPKNATPLLTPQEEKVLSMWMDGVSNNAIAAALSIHGKTVYTYKRNIRMKLHLGNRFSPFLSLPGKGD.

Positions 3–124 (KILVIDRCHF…TLSHTIQEAL (122 aa)) constitute a Response regulatory domain. The residue at position 8 (Asp8) is a 4-aspartylphosphate. The 66-residue stretch at 133–198 (PKNATPLLTP…SPFLSLPGKG (66 aa)) folds into the HTH luxR-type domain. Residues 157–176 (NNAIAAALSIHGKTVYTYKR) constitute a DNA-binding region (H-T-H motif).

Functionally, may serve to repress the entericidin locus in C.freundii. The chain is Transcriptional regulatory protein EntR (ecnR) from Citrobacter freundii.